The primary structure comprises 619 residues: Putative zinc metalloprotease CT_072 (619 aa).

His20 lines the Zn(2+) pocket. Glu21 is a catalytic residue. His24 serves as a coordination point for Zn(2+). The next 3 helical transmembrane spans lie at 103 to 125, 558 to 580, and 593 to 610; these read IFVL…GILY, VLNL…WEIL, and ALVP…FLTL.

Belongs to the peptidase M50B family. Requires Zn(2+) as cofactor.

The protein localises to the cell inner membrane. The protein is Putative zinc metalloprotease CT_072 of Chlamydia trachomatis serovar D (strain ATCC VR-885 / DSM 19411 / UW-3/Cx).